The sequence spans 90 residues: Large ribosomal subunit protein bL27 (90 aa).

Belongs to the bacterial ribosomal protein bL27 family.

This is Large ribosomal subunit protein bL27 from Rhodopseudomonas palustris (strain BisB5).